We begin with the raw amino-acid sequence, 247 residues long: Large ribosomal subunit protein uL3 (247 aa).

Disordered regions lie at residues 124–145 (RLGQSRGPMAHGSRYHRRPGSM) and 218–247 (VGQEVKAEAKDTASTEKKQAETKNDSASAE). Over residues 222–241 (VKAEAKDTASTEKKQAETKN) the composition is skewed to basic and acidic residues.

The protein belongs to the universal ribosomal protein uL3 family. Part of the 50S ribosomal subunit. Forms a cluster with proteins L14 and L19.

In terms of biological role, one of the primary rRNA binding proteins, it binds directly near the 3'-end of the 23S rRNA, where it nucleates assembly of the 50S subunit. The sequence is that of Large ribosomal subunit protein uL3 from Oenococcus oeni (strain ATCC BAA-331 / PSU-1).